The sequence spans 379 residues: Probable RNA methyltransferase RB6963 (379 aa).

Glu-89 serves as the catalytic Proton acceptor. The region spanning 96–332 (ATGRTTLCVS…VRYSLGNDIE (237 aa)) is the Radical SAM core domain. An intrachain disulfide couples Cys-103 to Cys-335. Residues Cys-110, Cys-114, and Cys-117 each contribute to the [4Fe-4S] cluster site. S-adenosyl-L-methionine-binding positions include 160 to 161 (GE), Ser-192, 215 to 217 (SLH), and Asn-291. Cys-335 serves as the catalytic S-methylcysteine intermediate.

It belongs to the radical SAM superfamily. RlmN family. Requires [4Fe-4S] cluster as cofactor.

Its subcellular location is the cytoplasm. The polypeptide is Probable RNA methyltransferase RB6963 (Rhodopirellula baltica (strain DSM 10527 / NCIMB 13988 / SH1)).